The primary structure comprises 472 residues: Protein PIN-LIKES 1 (472 aa).

Topologically, residues 1 to 93 (MSLTQSAKLH…FYSMRMRLLD (93 aa)) are lumenal. Residues 94 to 114 (LFITSSIPVAKILLITGIGFY) traverse the membrane as a helical segment. Over 115–133 (LALDQVNILNHDARKQLNN) the chain is Cytoplasmic. Residues 134-154 (IVFYVFSPSLVASSLSETITY) traverse the membrane as a helical segment. The Lumenal segment spans residues 155 to 161 (ESMVKMW). Residues 162-182 (FMPLNVLLTFIIGSFLGWIVI) traverse the membrane as a helical segment. Residues 183–193 (KITKPPSHLRG) are Cytoplasmic-facing. A helical transmembrane segment spans residues 194-214 (IIVGCCAAGNLGNMPLIIIPA). Residues 215 to 231 (ICNEKGSPFGDPESCEK) lie on the Lumenal side of the membrane. Residues 232 to 252 (FGLGYIALSMAIGAIYIWTYV) form a helical membrane-spanning segment. Over 253–309 (YNLMRMLANPAGETAINSTSSTMPLISPKVEVAEQVGTWGKVKQRVCSVAEKINLRT) the chain is Cytoplasmic. The chain crosses the membrane as a helical span at residues 310-330 (IFAPSTIAALIALAVGLNPLL). The Lumenal portion of the chain corresponds to 331–347 (RKLLVGNTAPLRVIEDS). The helical transmembrane segment at 348–368 (VSLLGDGAIPVLTLIVGGNLL) threads the bilayer. Over 369–379 (NGLRGSGINKS) the chain is Cytoplasmic. Residues 380 to 400 (VIMGVVVVRYLLLPILGVFIV) traverse the membrane as a helical segment. At 401–413 (RGAHYLGLVTSEP) the chain is on the lumenal side. The helical transmembrane segment at 414-434 (LYQFVLLLQYVVPPAMNLGTI) threads the bilayer. Topologically, residues 435–446 (TQLFGSGESECS) are cytoplasmic. The chain crosses the membrane as a helical span at residues 447-467 (VILFWSYALASVSLTVWPTFF). The Lumenal portion of the chain corresponds to 468 to 472 (MWLVA).

It belongs to the auxin efflux carrier (TC 2.A.69.2) family. Expressed in flowers.

Its subcellular location is the endoplasmic reticulum membrane. Functionally, involved in cellular auxin homeostasis by regulating auxin metabolism. Regulates intracellular auxin accumulation at the endoplasmic reticulum and thus auxin availability for nuclear auxin signaling. This chain is Protein PIN-LIKES 1, found in Arabidopsis thaliana (Mouse-ear cress).